Reading from the N-terminus, the 119-residue chain is Small ribosomal subunit protein bS16 (119 aa).

It belongs to the bacterial ribosomal protein bS16 family.

The polypeptide is Small ribosomal subunit protein bS16 (Chlamydia abortus (strain DSM 27085 / S26/3) (Chlamydophila abortus)).